Here is a 69-residue protein sequence, read N- to C-terminus: DNA-directed RNA polymerase subunit omega (69 aa).

This sequence belongs to the RNA polymerase subunit omega family. In terms of assembly, the RNAP catalytic core consists of 2 alpha, 1 beta, 1 beta' and 1 omega subunit. When a sigma factor is associated with the core the holoenzyme is formed, which can initiate transcription.

It carries out the reaction RNA(n) + a ribonucleoside 5'-triphosphate = RNA(n+1) + diphosphate. In terms of biological role, promotes RNA polymerase assembly. Latches the N- and C-terminal regions of the beta' subunit thereby facilitating its interaction with the beta and alpha subunits. The polypeptide is DNA-directed RNA polymerase subunit omega (Carboxydothermus hydrogenoformans (strain ATCC BAA-161 / DSM 6008 / Z-2901)).